An 859-amino-acid polypeptide reads, in one-letter code: Cleavage factor two protein 2 (859 aa).

Residues 560-611 (PDDSDNVNQNSRKRPLKDGAKTTSPVNEEDNKNEEEDGYNMSDPISKRSKHR) are disordered. A compositionally biased stretch (acidic residues) spans 586–597 (NEEDNKNEEEDG).

Component of the cleavage and polyadenylation factor (CPF) complex, which is composed of at least PTI1, SYC1, SSU72, GLC7, MPE1, REF2, PFS2, PTA1, YSH1/BRR5, SWD2, CFT2/YDH1, YTH1, CFT1/YHH1, FIP1 and PAP1. Interacts with the CTD domain of RPB1/RNA polymerase II; the interaction is enhanced upon phosphorylation of the RPB1 CTD domain. Interacts with PCF11.

The protein resides in the nucleus. RNA-binding component of the cleavage and polyadenylation factor (CPF) complex, which plays a key role in polyadenylation-dependent pre-mRNA 3'-end formation and cooperates with cleavage factors including the CFIA complex and NAB4/CFIB. May be involved in poly(A)-site recognition. May be involved in the association of the CPF, CPFIA and RNA polymerase II complexes. The polypeptide is Cleavage factor two protein 2 (CFT2) (Saccharomyces cerevisiae (strain ATCC 204508 / S288c) (Baker's yeast)).